We begin with the raw amino-acid sequence, 132 residues long: Translation initiation factor 5A (132 aa).

Lysine 36 is subject to Hypusine.

The protein belongs to the eIF-5A family.

It localises to the cytoplasm. Its function is as follows. Functions by promoting the formation of the first peptide bond. This Methanosphaera stadtmanae (strain ATCC 43021 / DSM 3091 / JCM 11832 / MCB-3) protein is Translation initiation factor 5A.